Reading from the N-terminus, the 1016-residue chain is MAPRTLWSCYLCCLLTAAAGAASYPPRGFSLYTGSSGALSPGGPQAQIAPRPASRHRNWCAYVVTRTVSCVLEDGVETYVKYQPCAWGQPQCPQSIMYRRFLRPRYRVAYKTVTDMEWRCCQGYGGDDCAESPAPALGPASSTPRPLARPARPNLSGSSAGSPLSGLGGEGPGESEKVQQLEEQVQSLTKELQGLRGVLQGLSGRLAEDVQRAVETAFNGRQQPADAAARPGVHETLNEIQHQLQLLDTRVSTHDQELGHLNNHHGGSSSSGGSRAPAPASAPPGPSEELLRQLEQRLQESCSVCLAGLDGFRRQQQEDRERLRAMEKLLASVEERQRHLAGLAVGRRPPQECCSPELGRRLAELERRLDVVAGSVTVLSGRRGTELGGAAGQGGHPPGYTSLASRLSRLEDRFNSTLGPSEEQEESWPGAPGGLSHWLPAARGRLEQLGGLLANVSGELGGRLDLLEEQVAGAMQACGQLCSGAPGEQDSQVSEILSALERRVLDSEGQLRLVGSGLHTVEAAGEARQATLEGLQEVVGRLQDRVDAQDETAAEFTLRLNLTAARLGQLEGLLQAHGDEGCGACGGVQEELGRLRDGVERCSCPLLPPRGPGAGPGVGGPSRGPLDGFSVFGGSSGSALQALQGELSEVILSFSSLNDSLNELQTTVEGQGADLADLGATKDRIISEINRLQQEATEHATESEERFRGLEEGQAQAGQCPSLEGRLGRLEGVCERLDTVAGGLQGLREGLSRHVAGLWAGLRETNTTSQMQAALLEKLVGGQAGLGRRLGALNSSLQLLEDRLHQLSLKDLTGPAGEAGPPGPPGLQGPPGPAGPPGSPGKDGQEGPIGPPGPQGEQGVEGAPAAPVPQVAFSAALSLPRSEPGTVPFDRVLLNDGGYYDPETGVFTAPLAGRYLLSAVLTGHRHEKVEAVLSRSNQGVARVDSGGYEPEGLENKPVAESQPSPGTLGVFSLILPLQAGDTVCVDLVMGQLAHSEEPLTIFSGALLYGDPELEHA.

The signal sequence occupies residues 1–21 (MAPRTLWSCYLCCLLTAAAGA). Residues 56–131 (HRNWCAYVVT…QGYGGDDCAE (76 aa)) enclose the EMI domain. Intrachain disulfides connect cysteine 60/cysteine 121, cysteine 85/cysteine 92, and cysteine 120/cysteine 129. Residues 135-182 (PALGPASSTPRPLARPARPNLSGSSAGSPLSGLGGEGPGESEKVQQLE) form a disordered region. A compositionally biased stretch (low complexity) spans 139-165 (PASSTPRPLARPARPNLSGSSAGSPLS). N-linked (GlcNAc...) asparagine glycosylation is present at asparagine 154. Positions 216 to 256 (TAFNGRQQPADAAARPGVHETLNEIQHQLQLLDTRVSTHDQ) form a coiled coil. 2 disordered regions span residues 257–288 (ELGH…GPSE) and 383–402 (RGTE…GYTS). Over residues 266-279 (GGSSSSGGSRAPAP) the composition is skewed to low complexity. Residues 356-420 (PELGRRLAEL…EDRFNSTLGP (65 aa)) are a coiled coil. Gly residues predominate over residues 386-397 (ELGGAAGQGGHP). Residue asparagine 415 is glycosylated (N-linked (GlcNAc...) asparagine). Residues 416 to 435 (STLGPSEEQEESWPGAPGGL) form a disordered region. Asparagine 455 and asparagine 561 each carry an N-linked (GlcNAc...) asparagine glycan. Residues 576-603 (AHGDEGCGACGGVQEELGRLRDGVERCS) are a coiled coil. A glycan (N-linked (GlcNAc...) asparagine) is linked at asparagine 658. Positions 685 to 752 (IISEINRLQQ…GLQGLREGLS (68 aa)) form a coiled coil. N-linked (GlcNAc...) asparagine glycans are attached at residues asparagine 766 and asparagine 794. 2 disordered regions span residues 811–863 (DLTG…VEGA) and 942–961 (RVDS…VAES). The Collagen-like domain maps to 814–864 (GPAGEAGPPGPPGLQGPPGPAGPPGSPGKDGQEGPIGPPGPQGEQGVEGAP). Positions 821-839 (PPGPPGLQGPPGPAGPPGS) are enriched in pro residues. Positions 835 to 857 (GPPGSPGKDGQEGPIGPPGPQGE) form a coiled coil. In terms of domain architecture, C1q spans 866-1013 (APVPQVAFSA…GALLYGDPEL (148 aa)).

In terms of assembly, homotrimer associated through a moderately stable interaction of the C-terminal globular C1q domains, allowing the nucleation of the triple helix and then a further quaternary assembly to higher-order polymers via intermolecular disulfide bonds. Interacts with EMILIN2. Interacts with EFEMP2; this interaction promotes the incorporation of EFEMP2 into the extracellular matrix. As to expression, distributed in tissues where resilience and elastic recoil are prominent. Highest levels in the adult small intestine, aorta, lung, uterus, and appendix and in the fetal spleen, kidney, lung, and heart; intermediate expression was detected in adult liver, ovary, colon, stomach, lymph node and spleen; adult heart, bladder, prostate, adrenal gland, mammary gland, placenta and kidney showed low expression whereas a series of other adult tissues, including skeletal muscle and different regions of adult brain show no expression. Detected in intramuscular nerve bundles, where it particularly localizes in the epineurium, the most external layer of dense connective tissue enclosing the nerve.

It localises to the secreted. Its subcellular location is the extracellular space. It is found in the extracellular matrix. Its function is as follows. Involved in elastic and collagen fibers formation. It is required for EFEMP2 deposition into the extracellular matrix, and collagen network assembly and cross-linking via protein-lysine 6-oxidase/LOX activity. May be responsible for anchoring smooth muscle cells to elastic fibers, and may be involved in the processes that regulate vessel assembly. Has cell adhesive capacity. In Homo sapiens (Human), this protein is EMILIN-1 (EMILIN1).